Reading from the N-terminus, the 98-residue chain is Alpha-defensin 1 (98 aa).

An N-terminal signal peptide occupies residues 1 to 19 (MRTLTLLTALLLLALQVQT). The propeptide occupies 20–63 (QSLEETADQVPAQDQPGAEAQDITISFAGDERSAREASKSLIGT). Intrachain disulfides connect Cys66-Cys96, Cys68-Cys84, and Cys74-Cys95.

It belongs to the alpha-defensin family. Paneth cells of the small bowel.

It localises to the secreted. Has broad-spectrum antimicrobial properties. The antimicrobial activity decreases in the present of salt in vitro. Binds anionic phospholipids, which leads to the aggregation of liposomes in vitro. Membrane permeabilization of the target cells is an essential part of the peptide's mode of antimicrobial activity. No hemolytic activity against sheep or horse erythrocytes. Has antibacterial activity against the bacterial horse pathogens Gram-positive R.equi ATCC 33701 P(-) (minimum bactericidal concentration or MBC=5 ug/ml) and R.equi ATCC 33701 P(+) (MBC=5 ug/ml), which are resistant against beta-lactam antibiotics. Also has antibacterial activity against highly infectious wild-type strain R.equi 85F P(+) (MBC=5 ug/ml), S.equi subsp. equi (MBC=5 ug/ml), S.equi subsp. zooepidemicus (MBC=5 ug/ml), S.dysgalactiae subsp. equisimilis (MBC=10 ug/ml), S.choleraesuis subsp. choleraesuis serovar Typhimurium (MBC=10 ug/ml), and P.multocida subsp. multocida (MBC=&gt;10 ug/ml). Probably contributes to the antimicrobial barrier function of the small bowel mucosa. The protein is Alpha-defensin 1 of Equus caballus (Horse).